We begin with the raw amino-acid sequence, 281 residues long: CDAN1-interacting nuclease 1 (281 aa).

A Phosphothreonine modification is found at threonine 114.

It is found in the nucleus. Its subcellular location is the cytoplasm. Plays a role in erythroid cell differentiation. The chain is CDAN1-interacting nuclease 1 from Mus musculus (Mouse).